The sequence spans 156 residues: Small ribosomal subunit protein uS7 (156 aa).

It belongs to the universal ribosomal protein uS7 family. Part of the 30S ribosomal subunit. Contacts proteins S9 and S11.

Its function is as follows. One of the primary rRNA binding proteins, it binds directly to 16S rRNA where it nucleates assembly of the head domain of the 30S subunit. Is located at the subunit interface close to the decoding center, probably blocks exit of the E-site tRNA. In Paenarthrobacter aurescens (strain TC1), this protein is Small ribosomal subunit protein uS7.